The primary structure comprises 242 residues: Type III pantothenate kinase (242 aa).

ATP is bound at residue 7 to 14 (DNSNTRTK). Substrate-binding positions include tyrosine 88 and 95–98 (GADR). Aspartate 97 functions as the Proton acceptor in the catalytic mechanism. Aspartate 117 contributes to the K(+) binding site. Residue threonine 120 coordinates ATP. Position 172 (threonine 172) interacts with substrate.

This sequence belongs to the type III pantothenate kinase family. As to quaternary structure, homodimer. The cofactor is NH4(+). It depends on K(+) as a cofactor.

The protein localises to the cytoplasm. The enzyme catalyses (R)-pantothenate + ATP = (R)-4'-phosphopantothenate + ADP + H(+). It participates in cofactor biosynthesis; coenzyme A biosynthesis; CoA from (R)-pantothenate: step 1/5. Its function is as follows. Catalyzes the phosphorylation of pantothenate (Pan), the first step in CoA biosynthesis. The sequence is that of Type III pantothenate kinase from Akkermansia muciniphila (strain ATCC BAA-835 / DSM 22959 / JCM 33894 / BCRC 81048 / CCUG 64013 / CIP 107961 / Muc).